Here is a 555-residue protein sequence, read N- to C-terminus: Transcriptional adapter 2b (555 aa).

A ZZ-type zinc finger spans residues 8 to 63 (FTKYNCTNCQDDIQGIRVHCAECENFDLCLQCFAAGAEIGAHQNNHSYQFMDTGTS). C13, C16, C27, C30, C36, C39, H49, and H53 together coordinate Zn(2+). Residues 69–121 (RGKGAWTAREEIRLLDAIEQYGFGNWEDISKHIETKSAEDAKEEYVNKFVNGT) form the SANT domain. The segment at 318 to 372 (THRSTGPYGHGKTDHTHTSNGSHRPPSSSLHSPQPNLRKVEMSSGGEASSNSIAP) is disordered. Residues 339-352 (SHRPPSSSLHSPQP) show a composition bias toward low complexity. Polar residues predominate over residues 363–372 (GEASSNSIAP).

In terms of assembly, component of histone acetyltransferase complexes containing Gcn5 and Ada3. As to quaternary structure, can heterooligomerize with Isoform A. Component of the Spt-Ada-Gcn5 acetyltransferase (SAGA) complex consisting of Ada1, Ada2b (Isoform B), Ada3, wda, Saf6, Spt3, Spt7, Spt20, Taf9, Taf10b, Taf12, Nipped-A/Tra1, Sf3b3, Sf3b5, not/nonstop, Sgf11, Sgf29, e(y)2, Atxn7 and Gcn5. Taf5 and Taf10, which has partially redundant properties with Taf10b, may also be part of this complex. Interacts (via C-terminus) with Spt3 and Taf12; the interactions are direct. Interacts with Ada3; the interaction is probably direct. May also interact directly with Spt7 and Gcn5. Interacts with p53. Can heterooligomerize with Isoform B. Component of the Chiffon histone acetyltransferase (CHAT) complex consisting of Ada3, Sgf29, Gcn5, chif/chiffon and Ada2b (Isoform A). Interacts (via N-terminus) with Gcn5 and Ada3; the interaction is direct. Can interact directly with Spt7 in vitro but in vivo this interaction is not stable probably due to the absence of other SAGA components. Interacts with p53. In terms of tissue distribution, expressed in nurse cells of stage 10 egg chambers and transcripts are dumped into the oocyte when nurse cells degenerate at late oogenesis.

The protein localises to the nucleus. Component of several Gcn5-containing histone acetyltransferase complexes that regulate nucleosome organization; involved in acetylation of histone H3, particularly on Lys-10 (H3K9ac) and Lys-15 (H3K14ac). Regulates the transcription of a subset of genes during development; affects recruitment of RNA polymerase II. May be involved in the function of some acidic activation domains, which activate transcription at distant sites. Involved in the p53-dependent apoptosis pathway response to DNA damage by genotoxic agents. Its function is as follows. Component of the SAGA histone acetyltransferase complex, which predominantly acetylates histone H3. In terms of biological role, component of the CHAT histone acetyltransferase complex, which predominantly acetylates histone H3. This is Transcriptional adapter 2b from Drosophila melanogaster (Fruit fly).